A 393-amino-acid polypeptide reads, in one-letter code: S-adenosylmethionine synthase (393 aa).

ATP is bound at residue histidine 16. Aspartate 18 contacts Mg(2+). Glutamate 44 serves as a coordination point for K(+). The L-methionine site is built by glutamate 57 and glutamine 100. The tract at residues 100–110 (QSPDIVMGVDG) is flexible loop. ATP contacts are provided by residues 165-167 (DAK), 231-232 (RF), aspartate 240, 246-247 (RK), and lysine 267. Aspartate 240 lines the L-methionine pocket. Lysine 271 contributes to the L-methionine binding site.

This sequence belongs to the AdoMet synthase family. In terms of assembly, homotetramer; dimer of dimers. Mg(2+) serves as cofactor. K(+) is required as a cofactor.

The protein resides in the cytoplasm. The enzyme catalyses L-methionine + ATP + H2O = S-adenosyl-L-methionine + phosphate + diphosphate. It participates in amino-acid biosynthesis; S-adenosyl-L-methionine biosynthesis; S-adenosyl-L-methionine from L-methionine: step 1/1. Its function is as follows. Catalyzes the formation of S-adenosylmethionine (AdoMet) from methionine and ATP. The overall synthetic reaction is composed of two sequential steps, AdoMet formation and the subsequent tripolyphosphate hydrolysis which occurs prior to release of AdoMet from the enzyme. In Coxiella burnetii (strain CbuG_Q212) (Coxiella burnetii (strain Q212)), this protein is S-adenosylmethionine synthase.